The sequence spans 567 residues: Dihydroxy-acid dehydratase 2 (567 aa).

Residue Cys56 participates in [2Fe-2S] cluster binding. Asp88 lines the Mg(2+) pocket. Position 129 (Cys129) interacts with [2Fe-2S] cluster. Mg(2+) contacts are provided by Asp130 and Lys131. Lys131 carries the N6-carboxylysine modification. Cys206 lines the [2Fe-2S] cluster pocket. Glu457 lines the Mg(2+) pocket. The active-site Proton acceptor is the Ser483.

It belongs to the IlvD/Edd family. In terms of assembly, homodimer. [2Fe-2S] cluster is required as a cofactor. The cofactor is Mg(2+).

It catalyses the reaction (2R)-2,3-dihydroxy-3-methylbutanoate = 3-methyl-2-oxobutanoate + H2O. The enzyme catalyses (2R,3R)-2,3-dihydroxy-3-methylpentanoate = (S)-3-methyl-2-oxopentanoate + H2O. It functions in the pathway amino-acid biosynthesis; L-isoleucine biosynthesis; L-isoleucine from 2-oxobutanoate: step 3/4. The protein operates within amino-acid biosynthesis; L-valine biosynthesis; L-valine from pyruvate: step 3/4. Functions in the biosynthesis of branched-chain amino acids. Catalyzes the dehydration of (2R,3R)-2,3-dihydroxy-3-methylpentanoate (2,3-dihydroxy-3-methylvalerate) into 2-oxo-3-methylpentanoate (2-oxo-3-methylvalerate) and of (2R)-2,3-dihydroxy-3-methylbutanoate (2,3-dihydroxyisovalerate) into 2-oxo-3-methylbutanoate (2-oxoisovalerate), the penultimate precursor to L-isoleucine and L-valine, respectively. This Corynebacterium efficiens (strain DSM 44549 / YS-314 / AJ 12310 / JCM 11189 / NBRC 100395) protein is Dihydroxy-acid dehydratase 2.